The following is a 361-amino-acid chain: sn-glycerol-3-phosphate import ATP-binding protein UgpC (361 aa).

The region spanning 4–235 (LSLKGIRKSY…PETVFVAGFI (232 aa)) is the ABC transporter domain. 37 to 44 (GPSGCGKS) is a binding site for ATP.

This sequence belongs to the ABC transporter superfamily. sn-glycerol-3-phosphate importer (TC 3.A.1.1.3) family. In terms of assembly, the complex is composed of two ATP-binding proteins (UgpC), two transmembrane proteins (UgpA and UgpE) and a solute-binding protein (UgpB).

Its subcellular location is the cell inner membrane. The catalysed reaction is sn-glycerol 3-phosphate(out) + ATP + H2O = sn-glycerol 3-phosphate(in) + ADP + phosphate + H(+). Its function is as follows. Part of the ABC transporter complex UgpBAEC involved in sn-glycerol-3-phosphate (G3P) import. Responsible for energy coupling to the transport system. This Burkholderia ambifaria (strain ATCC BAA-244 / DSM 16087 / CCUG 44356 / LMG 19182 / AMMD) (Burkholderia cepacia (strain AMMD)) protein is sn-glycerol-3-phosphate import ATP-binding protein UgpC.